The sequence spans 570 residues: Protein mom-5 (570 aa).

The first 16 residues, 1–16, serve as a signal peptide directing secretion; sequence MHRHILILFLFGCLSA. The Extracellular segment spans residues 17–230; sequence DQRLSSTSIS…FDGRVRRILR (214 aa). Residues 32–148 form the FZ domain; the sequence is STTRKCEHIT…FPVTDLCVGK (117 aa). Disulfide bonds link C37–C98, C45–C91, C82–C119, C108–C145, and C112–C136. The N-linked (GlcNAc...) asparagine glycan is linked to N51. A glycan (N-linked (GlcNAc...) asparagine) is linked at N149. A helical membrane pass occupies residues 231 to 251; it reads IWTAAWSVACFVCSLFTLVTF. Residues 252 to 264 are Cytoplasmic-facing; that stretch reads LVDLSRFAYPVRP. Residues 265–285 traverse the membrane as a helical segment; that stretch reads ILYLAFCYLAISTVYMIGVVG. Residues 286–319 lie on the Extracellular side of the membrane; the sequence is EDGFACGTYGSTPTTLVTQGGENVGCSALAVVHY. A helical membrane pass occupies residues 320–340; that stretch reads FFFMSSCAWWLVLCLAWFLAA. The Cytoplasmic segment spans residues 341–348; the sequence is NLKWGAES. Residues 349-369 traverse the membrane as a helical segment; the sequence is IAALSPYFHAMCWGVPAVLSV. At 370 to 395 the chain is on the extracellular side; the sequence is TVLVTNSVDGDVFTGICSVGNLNPSA. A helical membrane pass occupies residues 396–416; that stretch reads LVYFFFTPIVVSLALGAVLLV. Residues 417 to 449 lie on the Cytoplasmic side of the membrane; sequence CGIWSMIRIRSYIKLQHADVERNISKLEKLMLR. Residues 450–470 traverse the membrane as a helical segment; it reads IGAFAIMYSLPTAMNAAIMWY. Topologically, residues 471 to 515 are extracellular; the sequence is QAVNMPAWLEGWLHHRCVRLQDRELFGFTYPVDDCPMDPKVAAPE. A helical membrane pass occupies residues 516 to 536; it reads IIVFLLKYVSQLVVGITCAIW. Residues 537 to 570 lie on the Cytoplasmic side of the membrane; it reads VVSSKTLSSYHKAYLALSSRSPTVPAHVDQVNMR.

It belongs to the G-protein coupled receptor Fz/Smo family.

It localises to the cell membrane. It is found in the early endosome. In terms of biological role, receptor for Wnt proteins. Most frizzled receptors are coupled to the beta-catenin canonical signaling pathway, which leads to the activation of disheveled proteins, inhibition of gsk-3 kinase, nuclear accumulation of beta-catenin and activation of Wnt target genes. A second signaling pathway involving PKC and calcium fluxes has been seen for some family members, but it is not yet clear if it represents a distinct pathway or if it can be integrated in the canonical pathway, as pkc seems to be required for Wnt-mediated inactivation of gsk-3 kinase. Both pathways seem to involve interactions with G-proteins. Required in embryonic development for the correct positioning and orientation of the mitotic spindles and division planes in blastomere cells. During early embryonic cell divisions, directs the asymmetric positioning of transcription factors such as pop-1 and dsh-2 in daughter cells in order to determine cell fate specification. Acts redundantly with other Wnt receptors such as lin-17 to control vulval precursor cell specification and also the polarity of different cell types including distal tip cells, seam cells, AVG interneurons and P-cells and their descendants. Plays a role in the migration of cell types including distal tip cells and the QR neuroblast descendants, QR.p and QR.pa during larval development. Negatively regulates the unc-6/Netrin receptors unc-5 and unc-40 to control distal tip cell polarity and migration. Acts through ced-5/DOCK180 and ced-10/Rac to control both distal tip cell migration and the phagocytic clearance of apoptotic cell corpses. Furthermore, it is also required for the migration and axon guidance of the different neuronal cell types including CAN, ALM, HSN and the two mechanosensory neurons AVM and PVM. Mediates Wnt receptor cfz-2 in directing ALM migration, but may also act redundantly with the Wnt receptors cfz-2 and mig-1 to direct the migration of other neuronal cell types including CAN and HSN. Mediates Wnt ligand egl-20 in the control of the anterior-posterior axon guidance of AVM and PVM neurons. This is Protein mom-5 from Caenorhabditis elegans.